Here is a 418-residue protein sequence, read N- to C-terminus: Serine hydroxymethyltransferase (418 aa).

Residues leucine 121 and glycine 125–leucine 127 contribute to the (6S)-5,6,7,8-tetrahydrofolate site. The residue at position 230 (lysine 230) is an N6-(pyridoxal phosphate)lysine. Serine 355–phenylalanine 357 is a binding site for (6S)-5,6,7,8-tetrahydrofolate.

The protein belongs to the SHMT family. In terms of assembly, homodimer. Pyridoxal 5'-phosphate serves as cofactor.

The protein resides in the cytoplasm. It catalyses the reaction (6R)-5,10-methylene-5,6,7,8-tetrahydrofolate + glycine + H2O = (6S)-5,6,7,8-tetrahydrofolate + L-serine. It functions in the pathway one-carbon metabolism; tetrahydrofolate interconversion. The protein operates within amino-acid biosynthesis; glycine biosynthesis; glycine from L-serine: step 1/1. In terms of biological role, catalyzes the reversible interconversion of serine and glycine with tetrahydrofolate (THF) serving as the one-carbon carrier. This reaction serves as the major source of one-carbon groups required for the biosynthesis of purines, thymidylate, methionine, and other important biomolecules. Also exhibits THF-independent aldolase activity toward beta-hydroxyamino acids, producing glycine and aldehydes, via a retro-aldol mechanism. The polypeptide is Serine hydroxymethyltransferase (Streptococcus pyogenes serotype M3 (strain ATCC BAA-595 / MGAS315)).